Here is a 226-residue protein sequence, read N- to C-terminus: Uridylate kinase (226 aa).

6 to 10 (KISGK) provides a ligand contact to ATP. Gly43 is a binding site for UMP. 2 residues coordinate ATP: Gly44 and Arg48. Residues Asp65 and 113-119 (FQPGQST) contribute to the UMP site. Residues Thr139, Asn140, Tyr145, and Asp148 each contribute to the ATP site.

The protein belongs to the UMP kinase family. In terms of assembly, homohexamer.

The protein localises to the cytoplasm. The catalysed reaction is UMP + ATP = UDP + ADP. The protein operates within pyrimidine metabolism; CTP biosynthesis via de novo pathway; UDP from UMP (UMPK route): step 1/1. Inhibited by UTP. Functionally, catalyzes the reversible phosphorylation of UMP to UDP. This chain is Uridylate kinase, found in Saccharolobus islandicus (strain M.16.27) (Sulfolobus islandicus).